Reading from the N-terminus, the 80-residue chain is Large ribosomal subunit protein eL13 (80 aa).

It belongs to the eukaryotic ribosomal protein eL13 family.

The chain is Large ribosomal subunit protein eL13 from Aeropyrum pernix (strain ATCC 700893 / DSM 11879 / JCM 9820 / NBRC 100138 / K1).